A 335-amino-acid polypeptide reads, in one-letter code: Deoxyhypusine hydroxylase (335 aa).

5 HEAT-like PBS-type repeats span residues 74 to 100 (LKHELAYCLGQTRNLDTVPHLRKVLED), 107 to 133 (CRHEAAEALGALGDAGSLAILQRLRDD), 203 to 233 (KRYRAMFALRDMCSPPDLPTAVPAIEALAEG), 241 to 267 (FRHEIAFVFGQLSHPASIPSLVATLSD), and 274 to 301 (VRHEAAEALGSLGAEDGVEETLKRFVND). Residues histidine 76, glutamate 77, histidine 109, and glutamate 110 each coordinate Fe cation. Fe cation is bound by residues histidine 243, glutamate 244, histidine 276, and glutamate 277.

This sequence belongs to the deoxyhypusine hydroxylase family. The cofactor is Fe(2+).

The protein localises to the cytoplasm. It localises to the nucleus. It carries out the reaction [eIF5A protein]-deoxyhypusine + AH2 + O2 = [eIF5A protein]-hypusine + A + H2O. It participates in protein modification; eIF5A hypusination. In terms of biological role, catalyzes the hydroxylation of the N(6)-(4-aminobutyl)-L-lysine intermediate to form hypusine, an essential post-translational modification only found in mature eIF-5A factor. The polypeptide is Deoxyhypusine hydroxylase (Coccidioides immitis (strain RS) (Valley fever fungus)).